We begin with the raw amino-acid sequence, 84 residues long: Small ribosomal subunit protein bS18 (84 aa).

It belongs to the bacterial ribosomal protein bS18 family. Part of the 30S ribosomal subunit. Forms a tight heterodimer with protein bS6.

Its function is as follows. Binds as a heterodimer with protein bS6 to the central domain of the 16S rRNA, where it helps stabilize the platform of the 30S subunit. The sequence is that of Small ribosomal subunit protein bS18 from Clostridium kluyveri (strain NBRC 12016).